Here is a 336-residue protein sequence, read N- to C-terminus: NADH-cytochrome b5 reductase 2 (336 aa).

A helical transmembrane segment spans residues 28 to 50; it reads GGSSNGALYVGIGAAGLAGAYIY. The FAD-binding FR-type domain occupies 84–189; the sequence is QGFISLLLDK…KGPIPKYPWS (106 aa). FAD is bound at residue 192-227; that stretch reads KHEHIALIAGGTGITPMWQTARAIFKNPEDKTKVTL.

The protein belongs to the flavoprotein pyridine nucleotide cytochrome reductase family. FAD serves as cofactor.

It is found in the mitochondrion outer membrane. It catalyses the reaction 2 Fe(III)-[cytochrome b5] + NADH = 2 Fe(II)-[cytochrome b5] + NAD(+) + H(+). May mediate the reduction of outer membrane cytochrome b5. This is NADH-cytochrome b5 reductase 2 (MCR1) from Phaeosphaeria nodorum (strain SN15 / ATCC MYA-4574 / FGSC 10173) (Glume blotch fungus).